The sequence spans 122 residues: Large ribosomal subunit protein uL14 (122 aa).

It belongs to the universal ribosomal protein uL14 family. As to quaternary structure, part of the 50S ribosomal subunit. Forms a cluster with proteins L3 and L19. In the 70S ribosome, L14 and L19 interact and together make contacts with the 16S rRNA in bridges B5 and B8.

Functionally, binds to 23S rRNA. Forms part of two intersubunit bridges in the 70S ribosome. This Sorangium cellulosum (strain So ce56) (Polyangium cellulosum (strain So ce56)) protein is Large ribosomal subunit protein uL14.